We begin with the raw amino-acid sequence, 506 residues long: Maturase K (506 aa).

It belongs to the intron maturase 2 family. MatK subfamily.

The protein localises to the plastid. It is found in the chloroplast. Functionally, usually encoded in the trnK tRNA gene intron. Probably assists in splicing its own and other chloroplast group II introns. The sequence is that of Maturase K from Manihot esculenta (Cassava).